Consider the following 470-residue polypeptide: ATP synthase subunit beta (470 aa).

ATP is bound at residue 155-162 (GGAGVGKT).

The protein belongs to the ATPase alpha/beta chains family. As to quaternary structure, F-type ATPases have 2 components, CF(1) - the catalytic core - and CF(0) - the membrane proton channel. CF(1) has five subunits: alpha(3), beta(3), gamma(1), delta(1), epsilon(1). CF(0) has three main subunits: a(1), b(2) and c(9-12). The alpha and beta chains form an alternating ring which encloses part of the gamma chain. CF(1) is attached to CF(0) by a central stalk formed by the gamma and epsilon chains, while a peripheral stalk is formed by the delta and b chains.

It is found in the cell membrane. The enzyme catalyses ATP + H2O + 4 H(+)(in) = ADP + phosphate + 5 H(+)(out). In terms of biological role, produces ATP from ADP in the presence of a proton gradient across the membrane. The catalytic sites are hosted primarily by the beta subunits. The sequence is that of ATP synthase subunit beta from Staphylococcus haemolyticus (strain JCSC1435).